The primary structure comprises 283 residues: MLRIAVPNKGMLSEPAWNMLAEAGYRLRINPRQLVVQDPDNGIELFYLRPLDIAVYVGRGAIDVGITGQDLLKNSGTAALEHMPLGFGASTFRFAAPNESPITTLEDVQGKRVATTFDKLVHDYLVEHGIQAETIHLDGAVESSVQLGVADLIADVVSTGTTLRNAGLRVFAEPLMHSEACLIRSPRLNEQDPRLAVLTRRLQGVLTAHQYVLMDYDIPISKVAAAVAVTPGFESPTISPLHDKQWNAVRVMVPKAKVNQLMDDLYEVGARGIIVTALQASRM.

It belongs to the ATP phosphoribosyltransferase family. Long subfamily. Mg(2+) is required as a cofactor.

Its subcellular location is the cytoplasm. The catalysed reaction is 1-(5-phospho-beta-D-ribosyl)-ATP + diphosphate = 5-phospho-alpha-D-ribose 1-diphosphate + ATP. The protein operates within amino-acid biosynthesis; L-histidine biosynthesis; L-histidine from 5-phospho-alpha-D-ribose 1-diphosphate: step 1/9. Feedback inhibited by histidine. In terms of biological role, catalyzes the condensation of ATP and 5-phosphoribose 1-diphosphate to form N'-(5'-phosphoribosyl)-ATP (PR-ATP). Has a crucial role in the pathway because the rate of histidine biosynthesis seems to be controlled primarily by regulation of HisG enzymatic activity. The chain is ATP phosphoribosyltransferase from Bifidobacterium longum subsp. infantis (strain ATCC 15697 / DSM 20088 / JCM 1222 / NCTC 11817 / S12).